We begin with the raw amino-acid sequence, 448 residues long: Tubulin alpha-5 chain (448 aa).

The short motif at 1–4 (MREC) is the MREC motif element. GTP is bound at residue Gln11. Lys40 is modified (N6-acetyllysine). GTP-binding residues include Glu71, Ser140, Gly144, Thr145, Thr179, Asn206, and Asn228. Glu71 is a binding site for Mg(2+). The active site involves Glu254.

This sequence belongs to the tubulin family. As to quaternary structure, dimer of alpha and beta chains. A typical microtubule is a hollow water-filled tube with an outer diameter of 25 nm and an inner diameter of 15 nM. Alpha-beta heterodimers associate head-to-tail to form protofilaments running lengthwise along the microtubule wall with the beta-tubulin subunit facing the microtubule plus end conferring a structural polarity. Microtubules usually have 13 protofilaments but different protofilament numbers can be found in some organisms and specialized cells. The cofactor is Mg(2+). Post-translationally, some glutamate residues at the C-terminus are polyglycylated, resulting in polyglycine chains on the gamma-carboxyl group. Glycylation is mainly limited to tubulin incorporated into axonemes (cilia and flagella) whereas glutamylation is prevalent in neuronal cells, centrioles, axonemes, and the mitotic spindle. Both modifications can coexist on the same protein on adjacent residues, and lowering polyglycylation levels increases polyglutamylation, and reciprocally. The precise function of polyglycylation is still unclear. In terms of processing, some glutamate residues at the C-terminus are polyglutamylated, resulting in polyglutamate chains on the gamma-carboxyl group. Polyglutamylation plays a key role in microtubule severing by spastin (SPAST). SPAST preferentially recognizes and acts on microtubules decorated with short polyglutamate tails: severing activity by SPAST increases as the number of glutamates per tubulin rises from one to eight, but decreases beyond this glutamylation threshold. Acetylation of alpha chains at Lys-40 is located inside the microtubule lumen. This modification has been correlated with increased microtubule stability, intracellular transport and ciliary assembly.

It localises to the cytoplasm. The protein resides in the cytoskeleton. The enzyme catalyses GTP + H2O = GDP + phosphate + H(+). Tubulin is the major constituent of microtubules, a cylinder consisting of laterally associated linear protofilaments composed of alpha- and beta-tubulin heterodimers. Microtubules grow by the addition of GTP-tubulin dimers to the microtubule end, where a stabilizing cap forms. Below the cap, tubulin dimers are in GDP-bound state, owing to GTPase activity of alpha-tubulin. This chain is Tubulin alpha-5 chain, found in Gallus gallus (Chicken).